A 300-amino-acid chain; its full sequence is NAD kinase (300 aa).

Asp78 serves as the catalytic Proton acceptor. Residues 78–79, 152–153, His163, Arg180, Asp182, and 193–198 each bind NAD(+); these read DG, ND, and TAYALS.

It belongs to the NAD kinase family. It depends on a divalent metal cation as a cofactor.

The protein localises to the cytoplasm. It catalyses the reaction NAD(+) + ATP = ADP + NADP(+) + H(+). Functionally, involved in the regulation of the intracellular balance of NAD and NADP, and is a key enzyme in the biosynthesis of NADP. Catalyzes specifically the phosphorylation on 2'-hydroxyl of the adenosine moiety of NAD to yield NADP. The chain is NAD kinase from Alcanivorax borkumensis (strain ATCC 700651 / DSM 11573 / NCIMB 13689 / SK2).